A 289-amino-acid chain; its full sequence is Serine/threonine-protein phosphatase Pgam5, mitochondrial (289 aa).

The helical transmembrane segment at 7 to 23 threads the bilayer; sequence FVCGTGAGLAVYYLQRL.

This sequence belongs to the phosphoglycerate mutase family. BPG-dependent PGAM subfamily. As to quaternary structure, interacts with Pk92B/ASK1.

The protein localises to the mitochondrion outer membrane. It catalyses the reaction O-phospho-L-seryl-[protein] + H2O = L-seryl-[protein] + phosphate. The catalysed reaction is O-phospho-L-threonyl-[protein] + H2O = L-threonyl-[protein] + phosphate. Displays phosphatase activity for serine/threonine residues, and dephosphorylates and activates Pk92B kinase. Has apparently no phosphoglycerate mutase activity. This Drosophila erecta (Fruit fly) protein is Serine/threonine-protein phosphatase Pgam5, mitochondrial.